The primary structure comprises 349 residues: Sphingomyelinase D (349 aa).

The first 18 residues, 1–18 (MLLSSLISLALLSSQVVA), serve as a signal peptide directing secretion. H52 is a catalytic residue. Residues E72, D74, and D123 each contribute to the Mg(2+) site. The SMD-tail signature appears at 310-317 (ATNDNNPW).

It belongs to the sphingomyelinase D/phospholipase D family. Mg(2+) is required as a cofactor.

Its subcellular location is the secreted. The catalysed reaction is a sphingomyelin + H2O = an N-acylsphing-4-enine 1-phosphate + choline + H(+). Its function is as follows. Catalyzes the hydrolysis of sphingomyelin. Sphingomyelinases D are produced by some spider in their venoms, but also by arthropods such as ticks, or pathogenic bacteria and fungi. They might play a role in pathogenicity through different mechanisms, such as membrane destabilization and host cell penetration, but also pulmonary inflammation and cutaneous lesions. This Uncinocarpus reesii (strain UAMH 1704) protein is Sphingomyelinase D.